Reading from the N-terminus, the 326-residue chain is Adenosine receptor A1 (326 aa).

Topologically, residues 1-10 are extracellular; the sequence is MPHSVSAFQA. Residues 11-33 traverse the membrane as a helical segment; that stretch reads AYIGIEVLIALVSVPGNVLVIWA. The Cytoplasmic portion of the chain corresponds to 34 to 46; that stretch reads VKVNQALRDATFC. A helical transmembrane segment spans residues 47-69; the sequence is FIASLAVADVAVGALVIPLAILI. Over 70-80 the chain is Extracellular; sequence NIGPQTYFHTC. An intrachain disulfide couples C80 to C169. A helical transmembrane segment spans residues 81-102; the sequence is LMVACPVLILTQSSILALLAIA. The Cytoplasmic segment spans residues 103-123; the sequence is VDRYLRVKIPLRYKTVVTPRR. A helical transmembrane segment spans residues 124–146; it reads AAVAIAGCWILSLVVGLTPMFGW. Residues 147–176 lie on the Extracellular side of the membrane; it reads NNLSKIEMAWAANGSVGEPVIKCEFEKVIS. N159 carries an N-linked (GlcNAc...) asparagine glycan. Residues 177–201 traverse the membrane as a helical segment; that stretch reads MEYMVYFNFFVWVLPPLLLMVLIYL. Over 202–235 the chain is Cytoplasmic; that stretch reads EVFYLIRKQLSKKVSASSGDPQKYYGKELKIAKS. A helical membrane pass occupies residues 236–259; sequence LALILFLFALSWLPLHILNCITLF. At 260 to 267 the chain is on the extracellular side; sequence CPTCHKPT. Residues 268-292 form a helical membrane-spanning segment; sequence ILTYIAIFLTHGNSAMNPIVYAFRI. Topologically, residues 293-326 are cytoplasmic; that stretch reads QKFRVTFLKIWNDHFRCQPEPPIDEDLPEEKVDD. The S-palmitoyl cysteine moiety is linked to residue C309.

This sequence belongs to the G-protein coupled receptor 1 family.

It is found in the cell membrane. Functionally, receptor for adenosine. The activity of this receptor is mediated by G proteins which inhibit adenylyl cyclase. The sequence is that of Adenosine receptor A1 (ADORA1) from Cavia porcellus (Guinea pig).